A 300-amino-acid chain; its full sequence is Ribosomal protein bS6--L-glutamate ligase (300 aa).

Positions 104–287 (MQLLARQGID…IAGKMIRWIE (184 aa)) constitute an ATP-grasp domain. Residues lysine 141, 178 to 179 (EY), aspartate 187, and 211 to 213 (RSN) each bind ATP. Residues aspartate 248, glutamate 260, and asparagine 262 each contribute to the Mg(2+) site. Residues aspartate 248, glutamate 260, and asparagine 262 each coordinate Mn(2+).

It belongs to the RimK family. Mg(2+) serves as cofactor. The cofactor is Mn(2+).

In terms of biological role, an L-glutamate ligase that catalyzes the ATP-dependent post-translational addition of glutamate residues to the C-terminus of ribosomal protein bS6 (RpsF). Is also able to catalyze the synthesis of poly-alpha-glutamate in vitro, via ATP hydrolysis from unprotected glutamate as substrate. The number of glutamate residues added to either RpsF or to poly-alpha-glutamate changes with pH. In Shigella boydii serotype 4 (strain Sb227), this protein is Ribosomal protein bS6--L-glutamate ligase.